Here is a 92-residue protein sequence, read N- to C-terminus: Non-specific lipid-transfer protein 2 (92 aa).

Cystine bridges form between C4–C52, C14–C28, C29–C74, and C50–C88.

Belongs to the plant LTP family. In terms of tissue distribution, expressed in seeds and, at very low levels, in pulp of fruit (at protein level).

Functionally, plant non-specific lipid-transfer proteins transfer phospholipids as well as galactolipids across membranes. May play a role in wax or cutin deposition in the cell walls of expanding epidermal cells and certain secretory tissues. In Actinidia deliciosa (Kiwi), this protein is Non-specific lipid-transfer protein 2.